The sequence spans 280 residues: uncharacterized protein (280 aa).

2 disordered regions span residues 1-83 (MELK…EEEQ) and 248-280 (IRHREEKDQRDQNQKQKQDDKEQDSYKIEEARL). The segment covering 12 to 25 (SAKTDNHTVYQNSP) has biased composition (polar residues). Basic and acidic residues-rich tracts occupy residues 41 to 71 (KQTRQEKTTSSKGNTRTESRKFADEEKRVDD) and 249 to 280 (RHREEKDQRDQNQKQKQDDKEQDSYKIEEARL).

This sequence belongs to the chlamydial CPn_0705/CT_671/TC_0042 family.

This is an uncharacterized protein from Chlamydia pneumoniae (Chlamydophila pneumoniae).